Consider the following 165-residue polypeptide: Phosphopantetheine adenylyltransferase (165 aa).

Ser-10 is a binding site for substrate. ATP contacts are provided by residues 10–11 (SF) and His-18. Residues Lys-42, Thr-79, and Arg-93 each contribute to the substrate site. Residues 94-96 (GLR), Glu-104, and 129-135 (VRPITAT) each bind ATP.

It belongs to the bacterial CoaD family. Homohexamer. Mg(2+) is required as a cofactor.

Its subcellular location is the cytoplasm. It carries out the reaction (R)-4'-phosphopantetheine + ATP + H(+) = 3'-dephospho-CoA + diphosphate. Its pathway is cofactor biosynthesis; coenzyme A biosynthesis; CoA from (R)-pantothenate: step 4/5. Its function is as follows. Reversibly transfers an adenylyl group from ATP to 4'-phosphopantetheine, yielding dephospho-CoA (dPCoA) and pyrophosphate. This chain is Phosphopantetheine adenylyltransferase, found in Rhodopseudomonas palustris (strain HaA2).